Reading from the N-terminus, the 807-residue chain is Glycerol-3-phosphate acyltransferase (807 aa).

The HXXXXD motif signature appears at 308-313 (CHRSHM).

Belongs to the GPAT/DAPAT family.

Its subcellular location is the cell inner membrane. The catalysed reaction is sn-glycerol 3-phosphate + an acyl-CoA = a 1-acyl-sn-glycero-3-phosphate + CoA. It participates in phospholipid metabolism; CDP-diacylglycerol biosynthesis; CDP-diacylglycerol from sn-glycerol 3-phosphate: step 1/3. In Shewanella amazonensis (strain ATCC BAA-1098 / SB2B), this protein is Glycerol-3-phosphate acyltransferase.